The following is a 430-amino-acid chain: Enolase (430 aa).

Gln-164 serves as a coordination point for (2R)-2-phosphoglycerate. Glu-206 serves as the catalytic Proton donor. Residues Asp-243, Glu-286, and Asp-313 each contribute to the Mg(2+) site. (2R)-2-phosphoglycerate contacts are provided by Lys-338, Arg-367, Ser-368, and Lys-389. Lys-338 (proton acceptor) is an active-site residue.

The protein belongs to the enolase family. As to quaternary structure, component of the RNA degradosome, a multiprotein complex involved in RNA processing and mRNA degradation. Mg(2+) serves as cofactor.

It is found in the cytoplasm. The protein resides in the secreted. Its subcellular location is the cell surface. It carries out the reaction (2R)-2-phosphoglycerate = phosphoenolpyruvate + H2O. It functions in the pathway carbohydrate degradation; glycolysis; pyruvate from D-glyceraldehyde 3-phosphate: step 4/5. Its function is as follows. Catalyzes the reversible conversion of 2-phosphoglycerate (2-PG) into phosphoenolpyruvate (PEP). It is essential for the degradation of carbohydrates via glycolysis. This is Enolase from Dichelobacter nodosus (strain VCS1703A).